The sequence spans 275 residues: Large ribosomal subunit protein uL2 (275 aa).

2 disordered regions span residues 28 to 59 (KPFA…GGHK) and 224 to 275 (AMNP…RHKR). A compositionally biased stretch (polar residues) spans 35–49 (DSQSTTAGRNNNGHI). The segment covering 50–59 (TTRHKGGGHK) has biased composition (basic residues).

This sequence belongs to the universal ribosomal protein uL2 family. In terms of assembly, part of the 50S ribosomal subunit. Forms a bridge to the 30S subunit in the 70S ribosome.

One of the primary rRNA binding proteins. Required for association of the 30S and 50S subunits to form the 70S ribosome, for tRNA binding and peptide bond formation. It has been suggested to have peptidyltransferase activity; this is somewhat controversial. Makes several contacts with the 16S rRNA in the 70S ribosome. This is Large ribosomal subunit protein uL2 from Paraburkholderia xenovorans (strain LB400).